We begin with the raw amino-acid sequence, 440 residues long: Chromosome partition protein MukF (440 aa).

Positions 208–236 (LSETSGTLRELQDTLEAAGDKLQANLLQI) are leucine-zipper.

This sequence belongs to the MukF family. In terms of assembly, interacts, and probably forms a ternary complex, with MukE and MukB via its C-terminal region. The complex formation is stimulated by calcium or magnesium. It is required for an interaction between MukE and MukB.

It localises to the cytoplasm. Its subcellular location is the nucleoid. In terms of biological role, involved in chromosome condensation, segregation and cell cycle progression. May participate in facilitating chromosome segregation by condensation DNA from both sides of a centrally located replisome during cell division. Not required for mini-F plasmid partitioning. Probably acts via its interaction with MukB and MukE. Overexpression results in anucleate cells. It has a calcium binding activity. This is Chromosome partition protein MukF from Cronobacter sakazakii (strain ATCC BAA-894) (Enterobacter sakazakii).